The following is a 182-amino-acid chain: Large ribosomal subunit protein bL17m (182 aa).

Belongs to the bacterial ribosomal protein bL17 family.

Its subcellular location is the mitochondrion. The protein is Large ribosomal subunit protein bL17m (mrpl17) of Dictyostelium discoideum (Social amoeba).